A 296-amino-acid polypeptide reads, in one-letter code: MEYNDIATPTRTKQLLDQYGFKFKKSLGQNFLVDTNVIRNIIEAAGIDKTSGVIEIGPGMGSLTEQLAKHAKQVLAFEIDQRLIPILGETLSPYDNVTVINEDILKADVASAIETYLHHCDEIFVVANLPYYITTPILMGLLEKNLNINSYVVMMQKEVGERLSAIPSTKAYGSLSIAVQYYTDVKRIMVVPKGVFMPPPNVDSLVVKLTTLERPRVDVEDENLFFKLTRGAFVQRRKTILNNYMSLIQDSKEHKSRIIEWLEASGVAPSRRGESLNLNDYAQLSNNMKKYPELVI.

Positions 30, 32, 57, 78, 103, and 128 each coordinate S-adenosyl-L-methionine.

It belongs to the class I-like SAM-binding methyltransferase superfamily. rRNA adenine N(6)-methyltransferase family. RsmA subfamily.

It localises to the cytoplasm. It catalyses the reaction adenosine(1518)/adenosine(1519) in 16S rRNA + 4 S-adenosyl-L-methionine = N(6)-dimethyladenosine(1518)/N(6)-dimethyladenosine(1519) in 16S rRNA + 4 S-adenosyl-L-homocysteine + 4 H(+). Specifically dimethylates two adjacent adenosines (A1518 and A1519) in the loop of a conserved hairpin near the 3'-end of 16S rRNA in the 30S particle. May play a critical role in biogenesis of 30S subunits. The protein is Ribosomal RNA small subunit methyltransferase A of Macrococcus caseolyticus (strain JCSC5402) (Macrococcoides caseolyticum).